A 211-amino-acid polypeptide reads, in one-letter code: MQDRKPQQIARELALLSLSQLPLNPKKLTEEHLPKLVLATVRTLRAEVQDTLDNAAAELQRSNDRLLTSQTRASDLNTARNMLQEAISHTQTAINQLGASVEFPELIQLANQDKEVGRYAIKLVKIINEERGMIDEQITSALVDWQVTRLAQIDRDILRIAVAEMMFLNLPNSVAINEAVELAKRYSGDEGHRFINGVLRRVSDQKKALSV.

Belongs to the NusB family.

Functionally, involved in transcription antitermination. Required for transcription of ribosomal RNA (rRNA) genes. Binds specifically to the boxA antiterminator sequence of the ribosomal RNA (rrn) operons. This Trichormus variabilis (strain ATCC 29413 / PCC 7937) (Anabaena variabilis) protein is Transcription antitermination protein NusB.